The following is a 245-amino-acid chain: Exosome complex component RRP41 (245 aa).

Position 2 is an N-acetylalanine (A2).

It belongs to the RNase PH family. As to quaternary structure, component of the RNA exosome core complex (Exo-9), composed of EXOSC1, EXOSC2, EXOSC3, EXOSC4, EXOSC5, EXOSC6, EXOSC7, EXOSC8 and EXOSC9; within the complex interacts with EXOSC2, EXOSC7 and EXOSC9. The catalytically inactive RNA exosome core complex (Exo-9) associates with the catalytic subunit EXOSC10/RRP6. Exo-9 may associate with DIS3 to form the nucleolar exosome complex, or DIS3L to form the cytoplasmic exosome complex. Exo-9 is formed by a hexameric base ring consisting of the heterodimers EXOSC4-EXOSC9, EXOSC5-EXOSC8 and EXOSC6-EXOSC7, and a cap ring consisting of EXOSC1, EXOSC2 and EXOSC3. The RNA exosome complex associates with cofactors C1D/RRP47, MPHOSPH6/MPP6 and MTREX/MTR4. Interacts with DDX60. Interacts with DIS3; the interaction is direct.

Its subcellular location is the cytoplasm. The protein resides in the nucleus. The protein localises to the nucleolus. It localises to the nucleoplasm. In terms of biological role, non-catalytic component of the RNA exosome complex which has 3'-&gt;5' exoribonuclease activity and participates in a multitude of cellular RNA processing and degradation events. In the nucleus, the RNA exosome complex is involved in proper maturation of stable RNA species such as rRNA, snRNA and snoRNA, in the elimination of RNA processing by-products and non-coding 'pervasive' transcripts, such as antisense RNA species and promoter-upstream transcripts (PROMPTs), and of mRNAs with processing defects, thereby limiting or excluding their export to the cytoplasm. The RNA exosome may be involved in Ig class switch recombination (CSR) and/or Ig variable region somatic hypermutation (SHM) by targeting AICDA deamination activity to transcribed dsDNA substrates. In the cytoplasm, the RNA exosome complex is involved in general mRNA turnover and specifically degrades inherently unstable mRNAs containing AU-rich elements (AREs) within their 3' untranslated regions, and in RNA surveillance pathways, preventing translation of aberrant mRNAs. It seems to be involved in degradation of histone mRNA. The catalytic inactive RNA exosome core complex of 9 subunits (Exo-9) is proposed to play a pivotal role in the binding and presentation of RNA for ribonucleolysis, and to serve as a scaffold for the association with catalytic subunits and accessory proteins or complexes. EXOSC4 binds to ARE-containing RNAs. This is Exosome complex component RRP41 (EXOSC4) from Bos taurus (Bovine).